The following is a 278-amino-acid chain: Glucosamine-6-phosphate deaminase (278 aa).

Residue Asp-72 is the Proton acceptor; for enolization step of the active site. The For ring-opening step role is filled by Asp-141. His-143 acts as the Proton acceptor; for ring-opening step in catalysis. Glu-148 functions as the For ring-opening step in the catalytic mechanism.

Belongs to the glucosamine/galactosamine-6-phosphate isomerase family. As to quaternary structure, homohexamer.

Its subcellular location is the cytoplasm. The catalysed reaction is alpha-D-glucosamine 6-phosphate + H2O = beta-D-fructose 6-phosphate + NH4(+). It functions in the pathway nucleotide-sugar biosynthesis; UDP-N-acetyl-alpha-D-glucosamine biosynthesis; alpha-D-glucosamine 6-phosphate from D-fructose 6-phosphate: step 1/1. Its function is as follows. Catalyzes the reversible conversion of alpha-D-glucosamine 6-phosphate (GlcN-6P) into beta-D-fructose 6-phosphate (Fru-6P) and ammonium ion, a regulatory reaction step in de novo uridine diphosphate-N-acetyl-alpha-D-glucosamine (UDP-GlcNAc) biosynthesis via hexosamine pathway. This chain is Glucosamine-6-phosphate deaminase (Gnpda1), found in Aedes aegypti (Yellowfever mosquito).